Reading from the N-terminus, the 365-residue chain is Nicotinate N-methyltransferase 1 (365 aa).

D232 lines the S-adenosyl-L-methionine pocket.

The protein belongs to the class I-like SAM-binding methyltransferase superfamily. Cation-independent O-methyltransferase family.

It catalyses the reaction nicotinate + S-adenosyl-L-methionine = N-methylnicotinate + S-adenosyl-L-homocysteine. In terms of biological role, involved in nicotinate detoxification in planta. Catalyzes the conversion of nicotinate to N-methylnicotinate, which is a detoxified form of endogenous nicotinate in planta. This is Nicotinate N-methyltransferase 1 from Oryza sativa subsp. japonica (Rice).